The sequence spans 407 residues: Nicotinate phosphoribosyltransferase (407 aa).

His228 is modified (phosphohistidine; by autocatalysis).

The protein belongs to the NAPRTase family. Post-translationally, transiently phosphorylated on a His residue during the reaction cycle. Phosphorylation strongly increases the affinity for substrates and increases the rate of nicotinate D-ribonucleotide production. Dephosphorylation regenerates the low-affinity form of the enzyme, leading to product release.

The catalysed reaction is nicotinate + 5-phospho-alpha-D-ribose 1-diphosphate + ATP + H2O = nicotinate beta-D-ribonucleotide + ADP + phosphate + diphosphate. Its pathway is cofactor biosynthesis; NAD(+) biosynthesis; nicotinate D-ribonucleotide from nicotinate: step 1/1. 100-fold more active in the presence of saturating ATP. In terms of biological role, catalyzes the synthesis of beta-nicotinate D-ribonucleotide from nicotinate and 5-phospho-D-ribose 1-phosphate at the expense of ATP. Functions in the deamidating salvage pathway for production of NAD from nicotinamide. Displays a strict preference for nicotinate over nicotinamide substrate. The sequence is that of Nicotinate phosphoribosyltransferase from Acinetobacter baylyi (strain ATCC 33305 / BD413 / ADP1).